A 376-amino-acid chain; its full sequence is Putative glutamate--cysteine ligase 2-3 (376 aa).

The protein belongs to the glutamate--cysteine ligase type 2 family. YbdK subfamily.

The catalysed reaction is L-cysteine + L-glutamate + ATP = gamma-L-glutamyl-L-cysteine + ADP + phosphate + H(+). Functionally, ATP-dependent carboxylate-amine ligase which exhibits weak glutamate--cysteine ligase activity. In Nocardioides sp. (strain ATCC BAA-499 / JS614), this protein is Putative glutamate--cysteine ligase 2-3.